The sequence spans 1186 residues: ATP-dependent helicase/nuclease subunit A (1186 aa).

One can recognise a UvrD-like helicase ATP-binding domain in the interval 2–460 (NFSKNQRAVI…IELSENYRSQ (459 aa)). 23 to 30 (ASAGSGKT) is an ATP binding site. A UvrD-like helicase C-terminal domain is found at 487–771 (DVELKAANRD…SVMTIHAAKG (285 aa)).

It belongs to the helicase family. AddA subfamily. As to quaternary structure, heterodimer of AddA and AddB/RexB. Mg(2+) serves as cofactor.

The catalysed reaction is Couples ATP hydrolysis with the unwinding of duplex DNA by translocating in the 3'-5' direction.. The enzyme catalyses ATP + H2O = ADP + phosphate + H(+). In terms of biological role, the heterodimer acts as both an ATP-dependent DNA helicase and an ATP-dependent, dual-direction single-stranded exonuclease. Recognizes the chi site generating a DNA molecule suitable for the initiation of homologous recombination. The AddA nuclease domain is required for chi fragment generation; this subunit has the helicase and 3' -&gt; 5' nuclease activities. This Oenococcus oeni (strain ATCC BAA-331 / PSU-1) protein is ATP-dependent helicase/nuclease subunit A.